The primary structure comprises 154 residues: Large ribosomal subunit protein uL13 (154 aa).

The protein belongs to the universal ribosomal protein uL13 family. Part of the 50S ribosomal subunit.

Functionally, this protein is one of the early assembly proteins of the 50S ribosomal subunit, although it is not seen to bind rRNA by itself. It is important during the early stages of 50S assembly. In Rhizobium meliloti (strain 1021) (Ensifer meliloti), this protein is Large ribosomal subunit protein uL13.